We begin with the raw amino-acid sequence, 441 residues long: Probable acetylornithine aminotransferase, mitochondrial (441 aa).

Lys294 bears the N6-(pyridoxal phosphate)lysine mark.

It belongs to the class-III pyridoxal-phosphate-dependent aminotransferase family. Pyridoxal 5'-phosphate is required as a cofactor.

The protein localises to the mitochondrion matrix. It catalyses the reaction N(2)-acetyl-L-ornithine + 2-oxoglutarate = N-acetyl-L-glutamate 5-semialdehyde + L-glutamate. It functions in the pathway amino-acid biosynthesis; L-arginine biosynthesis; N(2)-acetyl-L-ornithine from L-glutamate: step 4/4. The protein is Probable acetylornithine aminotransferase, mitochondrial (arg1) of Schizosaccharomyces pombe (strain 972 / ATCC 24843) (Fission yeast).